Reading from the N-terminus, the 240-residue chain is Predicted GPI-anchored protein 58 (240 aa).

The signal sequence occupies residues 1–18; it reads MQFSTLVSLAAVIVSTNA. A disordered region spans residues 41–216; the sequence is HTNCPASSPA…NSTGPSSVPT (176 aa). Positions 51–86 are enriched in pro residues; the sequence is TPAPAPSASAPAPPAPEQPEPSAPAPAPSAPAPEQP. Low complexity predominate over residues 87–103; it reads EQPATPATPAAPATPAT. Composition is skewed to pro residues over residues 104-137 and 153-192; these read PAAP…PEQP and APAP…PAPS. The span at 193–216 shows a compositional bias: low complexity; sequence APASVPEQPASSVSNSTGPSSVPT. N-linked (GlcNAc...) asparagine glycosylation is present at asparagine 207. Residue glycine 219 is the site of GPI-anchor amidated glycine attachment. A propeptide spans 220-240 (removed in mature form); it reads AAAKQYITGSVAVIAAALLAL.

It is found in the cell membrane. In Candida albicans (strain SC5314 / ATCC MYA-2876) (Yeast), this protein is Predicted GPI-anchored protein 58 (PGA58).